The chain runs to 783 residues: Cilia- and flagella-associated protein 91 (783 aa).

Residues 748–760 (EDFELEEEAESLD) show a composition bias toward acidic residues. The interval 748–783 (EDFELEEEAESLDSEVPTVSVSKTSTIKPTQDEGEG) is disordered. Over residues 764 to 776 (PTVSVSKTSTIKP) the composition is skewed to polar residues.

Belongs to the CFAP91 family. As to quaternary structure, part of a complex containing MYCBP, AKAP1 and PRKAR2B. Interacts with MYCBP and AKAP1. Interacts with CFAP61. In terms of processing, phosphorylated by PKA. In terms of tissue distribution, expressed in the testis, in cells involved in spermatogenesis.

Its subcellular location is the cytoplasm. It localises to the mitochondrion. It is found in the cytoskeleton. The protein resides in the cilium axoneme. Involved in sperm flagellum axonemal organization and function. May regulate cilium motility through its role in the assembly of the axonemal radial spokes. This chain is Cilia- and flagella-associated protein 91, found in Mus musculus (Mouse).